A 1273-amino-acid polypeptide reads, in one-letter code: DNA-directed RNA polymerase subunit beta (1273 aa).

Positions 1252–1273 (ADDQDLVVSSNDEEVSENDERS) are disordered.

Belongs to the RNA polymerase beta chain family. In terms of assembly, the RNAP catalytic core consists of 2 alpha, 1 beta, 1 beta' and 1 omega subunit. When a sigma factor is associated with the core the holoenzyme is formed, which can initiate transcription.

It catalyses the reaction RNA(n) + a ribonucleoside 5'-triphosphate = RNA(n+1) + diphosphate. Functionally, DNA-dependent RNA polymerase catalyzes the transcription of DNA into RNA using the four ribonucleoside triphosphates as substrates. The sequence is that of DNA-directed RNA polymerase subunit beta from Dehalococcoides mccartyi (strain ATCC BAA-2100 / JCM 16839 / KCTC 5957 / BAV1).